We begin with the raw amino-acid sequence, 543 residues long: Hydroxylamine reductase (543 aa).

Residues C5, C8, C17, and C23 each coordinate [4Fe-4S] cluster. 8 residues coordinate hybrid [4Fe-2O-2S] cluster: H236, E260, C304, C398, C426, C451, E486, and K488. C398 carries the post-translational modification Cysteine persulfide.

Belongs to the HCP family. It depends on [4Fe-4S] cluster as a cofactor. Hybrid [4Fe-2O-2S] cluster is required as a cofactor.

It localises to the cytoplasm. It catalyses the reaction A + NH4(+) + H2O = hydroxylamine + AH2 + H(+). Its function is as follows. Catalyzes the reduction of hydroxylamine to form NH(3) and H(2)O. The sequence is that of Hydroxylamine reductase from Bacteroides thetaiotaomicron (strain ATCC 29148 / DSM 2079 / JCM 5827 / CCUG 10774 / NCTC 10582 / VPI-5482 / E50).